Here is a 198-residue protein sequence, read N- to C-terminus: MICOS complex subunit MIC26 (198 aa).

An N-terminal signal peptide occupies residues 1–25; the sequence is MFKVIHRYVGPASLSLLTFKVYASS. Residues 108–128 traverse the membrane as a helical segment; that stretch reads PGFFPRLGVIGFAGVVGLVLA. O-linked (Xyl...) (chondroitin sulfate) serine glycosylation is present at S162.

Belongs to the apolipoprotein O/MICOS complex subunit Mic27 family. As to quaternary structure, component of the mitochondrial contact site and cristae organizing system (MICOS) complex, composed of at least MICOS10/MIC10, CHCHD3/MIC19, CHCHD6/MIC25, APOOL/MIC27, IMMT/MIC60, APOO/MIC23/MIC26 and MICOS13/MIC13. This complex was also known under the names MINOS or MitOS complex. The MICOS complex associates with mitochondrial outer membrane proteins SAMM50, MTX1 and MTX2 (together described as components of the mitochondrial outer membrane sorting assembly machinery (SAM) complex) and DNAJC11, mitochondrial inner membrane protein TMEM11 and with HSPA9. The MICOS and SAM complexes together with DNAJC11 are part of a large protein complex spanning both membranes termed the mitochondrial intermembrane space bridging (MIB) complex. Interacts with IMMT/MIC60. Interacts with MICOS10/MIC10 and APOOL/MIC27. In terms of processing, O-glycosylation; glycosaminoglycan of chondroitin-sulfate type.

Its subcellular location is the mitochondrion inner membrane. It localises to the secreted. The protein resides in the mitochondrion. It is found in the endoplasmic reticulum membrane. The protein localises to the golgi apparatus membrane. Its function is as follows. Component of the MICOS complex, a large protein complex of the mitochondrial inner membrane that plays crucial roles in the maintenance of crista junctions, inner membrane architecture, and formation of contact sites to the outer membrane. Plays a crucial role in crista junction formation and mitochondrial function. Can induce cardiac lipotoxicity by enhancing mitochondrial respiration and fatty acid metabolism in cardiac myoblasts. Promotes cholesterol efflux from macrophage cells. Detected in HDL, LDL and VLDL. Secreted by a microsomal triglyceride transfer protein (MTTP)-dependent mechanism, probably as a VLDL-associated protein that is subsequently transferred to HDL. In Bos taurus (Bovine), this protein is MICOS complex subunit MIC26 (APOO).